Here is a 184-residue protein sequence, read N- to C-terminus: Ribosome-recycling factor (184 aa).

It belongs to the RRF family.

The protein localises to the cytoplasm. Its function is as follows. Responsible for the release of ribosomes from messenger RNA at the termination of protein biosynthesis. May increase the efficiency of translation by recycling ribosomes from one round of translation to another. In Leptospira borgpetersenii serovar Hardjo-bovis (strain JB197), this protein is Ribosome-recycling factor.